A 153-amino-acid chain; its full sequence is MEKLDKLSEAFKALLKQEKFGSQSEIVTALQELGFENINQSKVSRMLSKFGAVRTRNTKMEMVYQLPAELGVPTTSSPLKNLVVDIDHNDVLIVVKTSPGAAQLIARLLDSMGKSEGILGTIAGDDTIFITPTKVTPVEVLMQNVTELFESSF.

Belongs to the ArgR family.

It localises to the cytoplasm. It functions in the pathway amino-acid biosynthesis; L-arginine biosynthesis [regulation]. In terms of biological role, regulates arginine biosynthesis genes. The sequence is that of Arginine repressor from Actinobacillus pleuropneumoniae serotype 7 (strain AP76).